The sequence spans 271 residues: MLGLKEKICLYGFNNLTKTLSFNIYDICYAKTEREKEDYIKYIDEQYNSERLTKILCDVTEMIGAHVLNISKQDYEPQGASVNVLITEEALPVALIDPSCNKGELSYLELRDSVVGHLDKSHLTVHTYPEFHPNNDIISFRVDIDVSTCGKISPLNALDYLIGSFDSDVITIDYRVRGFTRDVDGRKCYIDHDIKSIQDYIDEETLKKYDAMDVNVYQSNIFHTKMMLKDIGLNNYLFNSDPYELSPNDRREIRDRISKEMIEIYGGVNIY.

Ser-121 functions as the Schiff-base intermediate with substrate; via pyruvic acid in the catalytic mechanism. A Pyruvic acid (Ser); by autocatalysis modification is found at Ser-121. The Proton acceptor; for processing activity role is filled by His-126. Cys-149 (proton donor; for catalytic activity) is an active-site residue.

It belongs to the prokaryotic AdoMetDC family. Type 2 subfamily. As to quaternary structure, heterooctamer of four alpha and four beta chains arranged as a tetramer of alpha/beta heterodimers. Requires pyruvate as cofactor. In terms of processing, is synthesized initially as an inactive proenzyme. Formation of the active enzyme involves a self-maturation process in which the active site pyruvoyl group is generated from an internal serine residue via an autocatalytic post-translational modification. Two non-identical subunits are generated from the proenzyme in this reaction, and the pyruvate is formed at the N-terminus of the alpha chain, which is derived from the carboxyl end of the proenzyme. The post-translation cleavage follows an unusual pathway, termed non-hydrolytic serinolysis, in which the side chain hydroxyl group of the serine supplies its oxygen atom to form the C-terminus of the beta chain, while the remainder of the serine residue undergoes an oxidative deamination to produce ammonia and the pyruvoyl group blocking the N-terminus of the alpha chain.

It catalyses the reaction S-adenosyl-L-methionine + H(+) = S-adenosyl 3-(methylsulfanyl)propylamine + CO2. Its pathway is amine and polyamine biosynthesis; S-adenosylmethioninamine biosynthesis; S-adenosylmethioninamine from S-adenosyl-L-methionine: step 1/1. Its function is as follows. Catalyzes the decarboxylation of S-adenosylmethionine to S-adenosylmethioninamine (dcAdoMet), the propylamine donor required for the synthesis of the polyamines spermine and spermidine from the diamine putrescine. The protein is S-adenosylmethionine decarboxylase proenzyme of Clostridium perfringens (strain SM101 / Type A).